The chain runs to 732 residues: uncharacterized protein (732 aa).

Helical transmembrane passes span 687–707 (YLFPVVGVAALLLIGNMGSDL) and 712–732 (GVKVATALSAMLLAIFAYYTS).

The protein belongs to the FadG family.

The protein localises to the cell membrane. This is an uncharacterized protein from Bacillus subtilis (strain 168).